Consider the following 371-residue polypeptide: MPHQQMLILFGLLPVATNISTWWNFGSMLLACSSMQVLTGFFLAVHYTANINLAFSSIVHITRDVPYGWMMQNLHAIGASMFFICIYIHIARGLYYGSYLNKKTWLSGTTLLIMLMATAXXXXXXXXXXXXXXXXXXXXXXXXXXXXXXXXXXXXXXXXXXXXXXXXXXXXXXXXILPFGIISLSSLHIMLLHEDGSSNPLGTNSDIDKIPFHPYHTYKDLLMLSLMVLTLLMTVSFLPDIFNDPDNFSKANPLVTPQHIKPEWYFLFAYGILRSVPNKLGGALALAMSIMILLTTPFTHTSTIRSMTFRPIMQLMFWTLVATFVVITWAATKPVEPPFTMISQVASTMYFLFFITNPITGLVENKIMKYN.

A run of 4 helical transmembrane segments spans residues 25 to 45, 69 to 90, 105 to 125, and 170 to 190; these read FGSM…FLAV, WMMQ…YIHI, WLSG…XXXX, and XXXX…LHIM. Heme b is bound by residues His-75 and His-89. The heme b site is built by Xaa-174 and His-188. His-193 is an a ubiquinone binding site. The next 4 membrane-spanning stretches (helical) occupy residues 218–238, 280–300, 312–332, and 339–358; these read YKDL…VSFL, LGGA…PFTH, IMQL…WAAT, and FTMI…ITNP.

Belongs to the cytochrome b family. As to quaternary structure, the cytochrome bc1 complex contains 3 respiratory subunits (MT-CYB, CYC1 and UQCRFS1), 2 core proteins (UQCRC1 and UQCRC2) and probably 6 low-molecular weight proteins. Heme b is required as a cofactor.

The protein localises to the mitochondrion inner membrane. Component of the ubiquinol-cytochrome c reductase complex (complex III or cytochrome b-c1 complex) that is part of the mitochondrial respiratory chain. The b-c1 complex mediates electron transfer from ubiquinol to cytochrome c. Contributes to the generation of a proton gradient across the mitochondrial membrane that is then used for ATP synthesis. The polypeptide is Cytochrome b (MT-CYB) (Eryx jaculus (Javelin sand boa)).